A 212-amino-acid chain; its full sequence is Urease accessory protein UreG (212 aa).

15–22 (GPVGSGKT) is a GTP binding site.

Belongs to the SIMIBI class G3E GTPase family. UreG subfamily. In terms of assembly, homodimer. UreD, UreF and UreG form a complex that acts as a GTP-hydrolysis-dependent molecular chaperone, activating the urease apoprotein by helping to assemble the nickel containing metallocenter of UreC. The UreE protein probably delivers the nickel.

It is found in the cytoplasm. In terms of biological role, facilitates the functional incorporation of the urease nickel metallocenter. This process requires GTP hydrolysis, probably effectuated by UreG. This chain is Urease accessory protein UreG, found in Opitutus terrae (strain DSM 11246 / JCM 15787 / PB90-1).